The sequence spans 304 residues: Protoheme IX farnesyltransferase 2 (304 aa).

9 helical membrane-spanning segments follow: residues 28 to 48 (VVAL…VVDF), 50 to 70 (WLQA…AAAF), 98 to 118 (ISVA…LYAL), 122 to 142 (LTAW…TMYL), 150 to 170 (IVIA…AVTG), 176 to 196 (AWLL…AIAI), 223 to 243 (ILLY…VGMV), 245 to 265 (SVYL…AWKL), and 282 to 302 (IYHL…GLFF).

This sequence belongs to the UbiA prenyltransferase family. Protoheme IX farnesyltransferase subfamily.

It localises to the cell inner membrane. The catalysed reaction is heme b + (2E,6E)-farnesyl diphosphate + H2O = Fe(II)-heme o + diphosphate. It functions in the pathway porphyrin-containing compound metabolism; heme O biosynthesis; heme O from protoheme: step 1/1. Functionally, converts heme B (protoheme IX) to heme O by substitution of the vinyl group on carbon 2 of heme B porphyrin ring with a hydroxyethyl farnesyl side group. This is Protoheme IX farnesyltransferase 2 from Vibrio campbellii (strain ATCC BAA-1116).